Here is a 137-residue protein sequence, read N- to C-terminus: Small ribosomal subunit protein uS12 (137 aa).

Positions M1 to K57 are disordered. Basic residues predominate over residues R9–K20. D102 carries the 3-methylthioaspartic acid modification.

It belongs to the universal ribosomal protein uS12 family. In terms of assembly, part of the 30S ribosomal subunit. Contacts proteins S8 and S17. May interact with IF1 in the 30S initiation complex.

Its function is as follows. With S4 and S5 plays an important role in translational accuracy. Interacts with and stabilizes bases of the 16S rRNA that are involved in tRNA selection in the A site and with the mRNA backbone. Located at the interface of the 30S and 50S subunits, it traverses the body of the 30S subunit contacting proteins on the other side and probably holding the rRNA structure together. The combined cluster of proteins S8, S12 and S17 appears to hold together the shoulder and platform of the 30S subunit. The polypeptide is Small ribosomal subunit protein uS12 (Streptococcus suis (strain 05ZYH33)).